A 361-amino-acid polypeptide reads, in one-letter code: Phospho-N-acetylmuramoyl-pentapeptide-transferase (361 aa).

10 helical membrane passes run 25–45 (RAVM…PWVI), 73–93 (TMGG…WADL), 97–117 (YVWL…YDDW), 132–152 (FKMA…IATA), 167–187 (TVAY…VIVG), 200–220 (GLAA…AYVA), 240–260 (VVVF…FNAY), 264–284 (VFMG…VAVI), 289–309 (IVLF…MIQV), and 338–358 (QVVV…LSTL).

It belongs to the glycosyltransferase 4 family. MraY subfamily. The cofactor is Mg(2+).

It localises to the cell inner membrane. The catalysed reaction is UDP-N-acetyl-alpha-D-muramoyl-L-alanyl-gamma-D-glutamyl-meso-2,6-diaminopimeloyl-D-alanyl-D-alanine + di-trans,octa-cis-undecaprenyl phosphate = di-trans,octa-cis-undecaprenyl diphospho-N-acetyl-alpha-D-muramoyl-L-alanyl-D-glutamyl-meso-2,6-diaminopimeloyl-D-alanyl-D-alanine + UMP. It participates in cell wall biogenesis; peptidoglycan biosynthesis. Functionally, catalyzes the initial step of the lipid cycle reactions in the biosynthesis of the cell wall peptidoglycan: transfers peptidoglycan precursor phospho-MurNAc-pentapeptide from UDP-MurNAc-pentapeptide onto the lipid carrier undecaprenyl phosphate, yielding undecaprenyl-pyrophosphoryl-MurNAc-pentapeptide, known as lipid I. The chain is Phospho-N-acetylmuramoyl-pentapeptide-transferase from Chromobacterium violaceum (strain ATCC 12472 / DSM 30191 / JCM 1249 / CCUG 213 / NBRC 12614 / NCIMB 9131 / NCTC 9757 / MK).